We begin with the raw amino-acid sequence, 247 residues long: Triosephosphate isomerase (247 aa).

Substrate-binding residues include N10 and K12. The active-site Electrophile is the H94. Residue E164 is the Proton acceptor of the active site.

Belongs to the triosephosphate isomerase family. As to quaternary structure, homodimer.

It is found in the cytoplasm. It carries out the reaction D-glyceraldehyde 3-phosphate = dihydroxyacetone phosphate. It catalyses the reaction dihydroxyacetone phosphate = methylglyoxal + phosphate. It participates in carbohydrate biosynthesis; gluconeogenesis. The protein operates within carbohydrate degradation; glycolysis; D-glyceraldehyde 3-phosphate from glycerone phosphate: step 1/1. Its function is as follows. Triosephosphate isomerase is an extremely efficient metabolic enzyme that catalyzes the interconversion between dihydroxyacetone phosphate (DHAP) and D-glyceraldehyde-3-phosphate (G3P) in glycolysis and gluconeogenesis. Functionally, it is also responsible for the non-negligible production of methylglyoxal a reactive cytotoxic side-product that modifies and can alter proteins, DNA and lipids. This is Triosephosphate isomerase (tpi-1) from Caenorhabditis elegans.